A 127-amino-acid polypeptide reads, in one-letter code: Large ribosomal subunit protein bL12 (127 aa).

This sequence belongs to the bacterial ribosomal protein bL12 family. As to quaternary structure, homodimer. Part of the ribosomal stalk of the 50S ribosomal subunit. Forms a multimeric L10(L12)X complex, where L10 forms an elongated spine to which 2 to 4 L12 dimers bind in a sequential fashion. Binds GTP-bound translation factors.

Its function is as follows. Forms part of the ribosomal stalk which helps the ribosome interact with GTP-bound translation factors. Is thus essential for accurate translation. The polypeptide is Large ribosomal subunit protein bL12 (Bordetella bronchiseptica (strain ATCC BAA-588 / NCTC 13252 / RB50) (Alcaligenes bronchisepticus)).